A 160-amino-acid chain; its full sequence is Transcriptional regulator MraZ (160 aa).

SpoVT-AbrB domains lie at 5–51 and 80–123; these read TFEK…GKAL and MAKL…EREA.

This sequence belongs to the MraZ family. Forms oligomers.

Its subcellular location is the cytoplasm. It is found in the nucleoid. This Phenylobacterium zucineum (strain HLK1) protein is Transcriptional regulator MraZ.